We begin with the raw amino-acid sequence, 316 residues long: Putative ubiquitin-conjugating enzyme E2 39 (316 aa).

The UBC core domain maps to 57–217; that stretch reads NWVKDIQKEW…VFVFSLKTMH (161 aa). The active-site Glycyl thioester intermediate is the cysteine 143.

This sequence belongs to the ubiquitin-conjugating enzyme family.

It carries out the reaction S-ubiquitinyl-[E1 ubiquitin-activating enzyme]-L-cysteine + [E2 ubiquitin-conjugating enzyme]-L-cysteine = [E1 ubiquitin-activating enzyme]-L-cysteine + S-ubiquitinyl-[E2 ubiquitin-conjugating enzyme]-L-cysteine.. The protein operates within protein modification; protein ubiquitination. Accepts the ubiquitin from the E1 complex and catalyzes its covalent attachment to other proteins. In Arabidopsis thaliana (Mouse-ear cress), this protein is Putative ubiquitin-conjugating enzyme E2 39 (UBC39).